We begin with the raw amino-acid sequence, 443 residues long: 23S rRNA (uracil(1939)-C(5))-methyltransferase RlmD (443 aa).

In terms of domain architecture, TRAM spans 12 to 70 (AKKLSQKIALKVQRLDHLGAGIAEHQGKVVFIPGALPGETVEVQLTEQKKNYARAKLQR). The [4Fe-4S] cluster site is built by Cys83, Cys89, Cys92, and Cys171. S-adenosyl-L-methionine-binding residues include Gln276, Phe305, Asn310, Glu326, Asp353, and Asp373. The active-site Nucleophile is the Cys399.

It belongs to the class I-like SAM-binding methyltransferase superfamily. RNA M5U methyltransferase family. RlmD subfamily.

The enzyme catalyses uridine(1939) in 23S rRNA + S-adenosyl-L-methionine = 5-methyluridine(1939) in 23S rRNA + S-adenosyl-L-homocysteine + H(+). Its function is as follows. Catalyzes the formation of 5-methyl-uridine at position 1939 (m5U1939) in 23S rRNA. The chain is 23S rRNA (uracil(1939)-C(5))-methyltransferase RlmD from Shewanella amazonensis (strain ATCC BAA-1098 / SB2B).